We begin with the raw amino-acid sequence, 1189 residues long: Pesticidal crystal protein Cry1Ca (1189 aa).

It belongs to the delta endotoxin family.

Functionally, promotes colloidosmotic lysis by binding to the midgut epithelial cells of many lepidopteran larvae including Spodoptera species. In Bacillus thuringiensis subsp. entomocidus, this protein is Pesticidal crystal protein Cry1Ca (cry1Ca).